A 504-amino-acid polypeptide reads, in one-letter code: Activin receptor type-1 (504 aa).

An N-terminal signal peptide occupies residues 1–16 (MALPVLLLLLALPSRS). Topologically, residues 17 to 119 (VQDEELKLNE…EAAGYSMETL (103 aa)) are extracellular. Residue N94 is glycosylated (N-linked (GlcNAc...) asparagine). Residues 120-140 (IIVILAPVVVLVIFSVVAVLI) traverse the membrane as a helical segment. Over 141-504 (IRRIQKNHME…NSLDKLKADC (364 aa)) the chain is Cytoplasmic. The 30-residue stretch at 173–202 (STLADLLDHSCTSGSGSGLPFLVQRTVARQ) folds into the GS domain. Residues 203 to 497 (ITLVECVGKG…KTLTKIDNSL (295 aa)) enclose the Protein kinase domain. Residues 209-217 (VGKGRYGEV) and K230 each bind ATP. Residue D331 is the Proton acceptor of the active site.

This sequence belongs to the protein kinase superfamily. TKL Ser/Thr protein kinase family. TGFB receptor subfamily. It depends on Mg(2+) as a cofactor. Mn(2+) is required as a cofactor.

It localises to the membrane. The catalysed reaction is L-threonyl-[receptor-protein] + ATP = O-phospho-L-threonyl-[receptor-protein] + ADP + H(+). The enzyme catalyses L-seryl-[receptor-protein] + ATP = O-phospho-L-seryl-[receptor-protein] + ADP + H(+). Its function is as follows. On ligand binding, forms a receptor complex consisting of two type II and two type I transmembrane serine/threonine kinases. Type II receptors phosphorylate and activate type I receptors which autophosphorylate, then bind and activate SMAD transcriptional regulators. Receptor for activin. The protein is Activin receptor type-1 (ACVR1) of Gallus gallus (Chicken).